A 2470-amino-acid polypeptide reads, in one-letter code: Serine/threonine-protein kinase mTor (2470 aa).

HEAT repeat units lie at residues 172–209 (QHIL…VTAQ), 746–785 (SYMN…VNGG), 791–829 (LWAD…ATGR), 835–873 (HKYP…MDPY), 962–999 (PYLA…FVKL), 1043–1080 (DYLA…FGST), 1083–1122 (YYLP…QLDF), and 1124–1160 (DFSS…QLGK). Residues 1349–1903 (LLGTRAMACR…VYPLTVASKS (555 aa)) form the FAT domain. 2 TPR repeats span residues 1407–1440 (ANEL…DSSD) and 1718–1751 (MATW…DPNW). One copy of the HEAT 9 repeat lies at 1854 to 1891 (NTWLQVIPQLIARIDTHRQLVGQLIHQLLMDIGKNHPQ). The PI3K/PI4K catalytic domain occupies 2077–2389 (IKTNLQVITS…SLSNSVEDSL (313 aa)). A G-loop region spans residues 2083-2089 (VITSKQR). The catalytic loop stretch occupies residues 2256–2264 (GLGDRHPSN). The segment at 2276–2301 (HIDFGDCFEVAMTREKFPEKIPFRLT) is activation loop. Residues 2364-2389 (AGAGAPGGRGGSGMQDSLSNSVEDSL) form a disordered region. The span at 2367–2376 (GAPGGRGGSG) shows a compositional bias: gly residues. The segment covering 2377–2386 (MQDSLSNSVE) has biased composition (polar residues). Positions 2438-2470 (KSVNEQSQVELLIQQATNNENLCQCYIGWCPFW) constitute an FATC domain.

Belongs to the PI3/PI4-kinase family. As to quaternary structure, may be part of a minimal complex, TORC1, consisting of mTor, raptor and lst8. May be part of a minimal complex, TORC2, consisting of mTor, rictor and lst8. Self-associates; assembles into homomultimeric complexes. Component of a multiprotein complex.

It catalyses the reaction L-seryl-[protein] + ATP = O-phospho-L-seryl-[protein] + ADP + H(+). The enzyme catalyses L-threonyl-[protein] + ATP = O-phospho-L-threonyl-[protein] + ADP + H(+). Functionally, promotes cell and tissue growth, maintains tissue homeostatis and controls responses to environmental stress and aging. Regulates growth during animal development by coupling growth factor signaling to nutrient availability. Central regulators of autophagy. May be involved in atg1 phosphorylation. May also be involved, directly or indirectly, in the control of neuronal function. Phosphorylates S6K/p70S6K, in vitro. May regulate the activity of S6K. Overexpression inhibits growth and reduces cell size. Affects the timing of neuronal cell differentiation. Hyperactivation of the signaling leads to accelerated differentiation, whereas inhibition of the signaling retards differentiation. Thus, in addition to controlling growth of the cell in which it resides, it can also influence growth of distant cells and organs during development via a humoral mechanism. As part of the TORC1 complex regulates energy homeostasis and promotes certain aspects of larval growth by negatively regulating REPTOR. REPTOR functions downstream of TORC1 to regulate the expression of stress response genes in response to TORC1 inhibition resulting from nutrient deprivation. When TORC1 activity is high it phosphorylates REPTOR which inhibits its recruitment into the nucleus and antagonizes their function. This function is essential under normal feeding conditions to promote TORC1-dependent growth during larval development and, in adults and larvae to prevent the REPTOR-dependent expression of nutrient stress response genes. In short, during development, it primarily controls growth, whereas in the adult, where there is relatively little growth, it controls aging and other aspects of nutrient-related physiology. Rag GTPases act as activators of TORC1 in response to amino acid signals. The chain is Serine/threonine-protein kinase mTor from Drosophila melanogaster (Fruit fly).